The chain runs to 461 residues: uncharacterized protein (461 aa).

3 LRR repeats span residues asparagine 119 to serine 140, leucine 141 to lysine 162, and asparagine 163 to lysine 184. The LRRCT domain occupies asparagine 197 to aspartate 237.

This is an uncharacterized protein from Caenorhabditis elegans.